The sequence spans 803 residues: Phenylalanine--tRNA ligase beta subunit (803 aa).

One can recognise a tRNA-binding domain in the interval 40–153 (ASLDRRIVVG…SSWEIGKPFA (114 aa)). Residues 400 to 476 (ADLQLLALRP…RLYGYNAIES (77 aa)) form the B5 domain. Asp454, Asp460, Glu463, and Glu464 together coordinate Mg(2+). The 93-residue stretch at 709–801 (SRFPVVERDI…AESKLGAVIR (93 aa)) folds into the FDX-ACB domain.

The protein belongs to the phenylalanyl-tRNA synthetase beta subunit family. Type 1 subfamily. In terms of assembly, tetramer of two alpha and two beta subunits. Mg(2+) serves as cofactor.

Its subcellular location is the cytoplasm. It catalyses the reaction tRNA(Phe) + L-phenylalanine + ATP = L-phenylalanyl-tRNA(Phe) + AMP + diphosphate + H(+). In Chlorobium chlorochromatii (strain CaD3), this protein is Phenylalanine--tRNA ligase beta subunit.